The chain runs to 239 residues: Fatty acid metabolism regulator protein (239 aa).

Residues 6 to 74 (QSPAGFAEEY…HGKPTKVNNF (69 aa)) enclose the HTH gntR-type domain. Positions 34-53 (ERELSELIGVTRTTLREVLQ) form a DNA-binding region, H-T-H motif.

In terms of assembly, homodimer.

Its subcellular location is the cytoplasm. In terms of biological role, multifunctional regulator of fatty acid metabolism. The sequence is that of Fatty acid metabolism regulator protein from Shigella flexneri.